We begin with the raw amino-acid sequence, 438 residues long: Histidine--tRNA ligase (438 aa).

Belongs to the class-II aminoacyl-tRNA synthetase family. Homodimer.

It localises to the cytoplasm. It catalyses the reaction tRNA(His) + L-histidine + ATP = L-histidyl-tRNA(His) + AMP + diphosphate + H(+). In Thermobifida fusca (strain YX), this protein is Histidine--tRNA ligase (hisS).